The chain runs to 350 residues: Phosphotriesterase-related protein (350 aa).

Residues histidine 22, histidine 24, glutamate 169, histidine 201, histidine 230, and aspartate 298 each coordinate a divalent metal cation.

Belongs to the metallo-dependent hydrolases superfamily. Phosphotriesterase family. The cofactor is a divalent metal cation.

The sequence is that of Phosphotriesterase-related protein from Drosophila mojavensis (Fruit fly).